A 163-amino-acid polypeptide reads, in one-letter code: NAD(P)H-quinone oxidoreductase subunit I, chloroplastic (163 aa).

4Fe-4S ferredoxin-type domains are found at residues 55–84 (GRIH…VDWK) and 95–124 (LNYS…MTEE). Cysteine 64, cysteine 67, cysteine 70, cysteine 74, cysteine 104, cysteine 107, cysteine 110, and cysteine 114 together coordinate [4Fe-4S] cluster.

It belongs to the complex I 23 kDa subunit family. In terms of assembly, NDH is composed of at least 16 different subunits, 5 of which are encoded in the nucleus. Requires [4Fe-4S] cluster as cofactor.

The protein resides in the plastid. The protein localises to the chloroplast thylakoid membrane. It carries out the reaction a plastoquinone + NADH + (n+1) H(+)(in) = a plastoquinol + NAD(+) + n H(+)(out). The enzyme catalyses a plastoquinone + NADPH + (n+1) H(+)(in) = a plastoquinol + NADP(+) + n H(+)(out). Functionally, NDH shuttles electrons from NAD(P)H:plastoquinone, via FMN and iron-sulfur (Fe-S) centers, to quinones in the photosynthetic chain and possibly in a chloroplast respiratory chain. The immediate electron acceptor for the enzyme in this species is believed to be plastoquinone. Couples the redox reaction to proton translocation, and thus conserves the redox energy in a proton gradient. This Glycine max (Soybean) protein is NAD(P)H-quinone oxidoreductase subunit I, chloroplastic.